The following is a 347-amino-acid chain: CD5 antigen-like (347 aa).

Residues 1-19 (MALLFSLILAICTRPGFLA) form the signal peptide. 3 SRCR domains span residues 24 to 125 (VRLV…ASCE), 138 to 239 (VRLA…VECE), and 244 to 346 (LRLV…VICS). Disulfide bonds link C33-C67, C49-C114, C62-C124, C96-C106, C163-C228, C176-C238, C208-C218, C253-C287, C269-C335, C282-C345, and C315-C325.

Interacts with FASN; the interaction is direct. Interacts (via SRCR2 and SRCR3) with pentameric IgM (via Fc region); disulfide-linked. In terms of processing, not N-glycosylated. Probably not O-glycosylated. As to expression, expressed in spleen, lymph node, thymus, bone marrow, and fetal liver, but not in non-lymphoid tissues.

It is found in the secreted. Its subcellular location is the cytoplasm. In terms of biological role, secreted protein that acts as a key regulator of lipid synthesis: mainly expressed by macrophages in lymphoid and inflamed tissues and regulates mechanisms in inflammatory responses, such as infection or atherosclerosis. Able to inhibit lipid droplet size in adipocytes. Following incorporation into mature adipocytes via CD36-mediated endocytosis, associates with cytosolic FASN, inhibiting fatty acid synthase activity and leading to lipolysis, the degradation of triacylglycerols into glycerol and free fatty acids (FFA). CD5L-induced lipolysis occurs with progression of obesity: participates in obesity-associated inflammation following recruitment of inflammatory macrophages into adipose tissues, a cause of insulin resistance and obesity-related metabolic disease. Regulation of intracellular lipids mediated by CD5L has a direct effect on transcription regulation mediated by nuclear receptors ROR-gamma (RORC). Acts as a key regulator of metabolic switch in T-helper Th17 cells. Regulates the expression of pro-inflammatory genes in Th17 cells by altering the lipid content and limiting synthesis of cholesterol ligand of RORC, the master transcription factor of Th17-cell differentiation. CD5L is mainly present in non-pathogenic Th17 cells, where it decreases the content of polyunsaturated fatty acyls (PUFA), affecting two metabolic proteins MSMO1 and CYP51A1, which synthesize ligands of RORC, limiting RORC activity and expression of pro-inflammatory genes. Participates in obesity-associated autoimmunity via its association with IgM, interfering with the binding of IgM to Fcalpha/mu receptor and enhancing the development of long-lived plasma cells that produce high-affinity IgG autoantibodies. Also acts as an inhibitor of apoptosis in macrophages: promotes macrophage survival from the apoptotic effects of oxidized lipids in case of atherosclerosis. Involved in early response to microbial infection against various pathogens by acting as a pattern recognition receptor and by promoting autophagy. In Homo sapiens (Human), this protein is CD5 antigen-like (CD5L).